The following is a 60-amino-acid chain: UPF0434 protein YcaR (60 aa).

The protein belongs to the UPF0434 family.

The protein is UPF0434 protein YcaR of Escherichia fergusonii (strain ATCC 35469 / DSM 13698 / CCUG 18766 / IAM 14443 / JCM 21226 / LMG 7866 / NBRC 102419 / NCTC 12128 / CDC 0568-73).